We begin with the raw amino-acid sequence, 126 residues long: Hydrogenase maturation factor HypA (126 aa).

Position 2 (histidine 2) interacts with Ni(2+). Positions 78, 81, 97, and 100 each coordinate Zn(2+).

This sequence belongs to the HypA/HybF family.

Involved in the maturation of [NiFe] hydrogenases. Required for nickel insertion into the metal center of the hydrogenase. This is Hydrogenase maturation factor HypA from Methanococcus maripaludis (strain C7 / ATCC BAA-1331).